A 1482-amino-acid chain; its full sequence is Cystic fibrosis transmembrane conductance regulator (1482 aa).

At Met-1–Phe-77 the chain is on the cytoplasmic side. A helical transmembrane segment spans residues Phe-78–Gln-98. The 285-residue stretch at Phe-81–Leu-365 folds into the ABC transmembrane type-1 1 domain. Residues Pro-99–Tyr-122 are Extracellular-facing. A helical membrane pass occupies residues Leu-123–His-146. Residues His-147–Leu-195 are Cytoplasmic-facing. The helical transmembrane segment at Ala-196–Trp-216 threads the bilayer. The Extracellular segment spans residues Asp-217–Ser-222. Residues Ala-223–Met-243 form a helical membrane-spanning segment. Residues Met-244–Lys-298 are Cytoplasmic-facing. The helical transmembrane segment at Thr-299–Phe-319 threads the bilayer. The Extracellular segment spans residues Leu-320–Thr-339. The helical transmembrane segment at Ile-340–Val-358 threads the bilayer. Residues Gln-359–Asn-859 are Cytoplasmic-facing. ATP contacts are provided by residues Trp-401, Ser-434, Gly-458 to Thr-465, and Gln-493. One can recognise an ABC transporter 1 domain in the interval Asn-423–Gly-646. Cys-524 carries the S-palmitoyl cysteine lipid modification. Phosphoserine occurs at positions 549 and 660. The disordered R region stretch occupies residues Ser-654–Glu-832. Residue Ser-670 is modified to Phosphoserine; by PKA. At Ser-686 the chain carries Phosphoserine. Lys-688 is covalently cross-linked (Glycyl lysine isopeptide (Lys-Gly) (interchain with G-Cter in ubiquitin)). 6 positions are modified to phosphoserine: Ser-700, Ser-712, Ser-737, Ser-769, Ser-796, and Ser-814. A helical membrane pass occupies residues Leu-860–Val-880. The region spanning Leu-860 to Ser-1156 is the ABC transmembrane type-1 2 domain. Over Gly-881–Ile-919 the chain is Extracellular. Asn-895 and Asn-901 each carry an N-linked (GlcNAc...) asparagine glycan. Residues Tyr-920–His-940 traverse the membrane as a discontinuously helical segment. The Cytoplasmic portion of the chain corresponds to Thr-941–Thr-991. A helical membrane pass occupies residues Ile-992–Ile-1012. Residues Arg-1013–Pro-1014 lie on the Extracellular side of the membrane. The chain crosses the membrane as a helical span at residues Tyr-1015 to Leu-1035. The Cytoplasmic segment spans residues Gln-1036–Thr-1096. The helical transmembrane segment at Leu-1097 to Phe-1117 threads the bilayer. The Extracellular portion of the chain corresponds to Ile-1118–Gly-1131. Residues Ile-1132–Ile-1152 form a helical membrane-spanning segment. Residues Asp-1153 to Leu-1482 lie on the Cytoplasmic side of the membrane. Residues Met-1212–His-1445 enclose the ABC transporter 2 domain. ATP-binding positions include Tyr-1221 and Gly-1246 to Ser-1253. Residues Arg-1388–Leu-1482 form an interaction with GORASP2 region. The S-palmitoyl cysteine moiety is linked to residue Cys-1397. A phosphoserine mark is found at Ser-1446 and Ser-1458. Positions Thr-1480–Leu-1482 match the PDZ-binding motif.

This sequence belongs to the ABC transporter superfamily. ABCC family. CFTR transporter (TC 3.A.1.202) subfamily. In terms of assembly, monomer; does not require oligomerization for channel activity. May form oligomers in the membrane. Interacts with SLC26A3, SLC26A6 and NHERF1. Interacts with SHANK2. Interacts with MYO6. Interacts (via C-terminus) with GOPC (via PDZ domain); this promotes CFTR internalization and thereby decreases channel activity. Interacts with SLC4A7 through NHERF1. Found in a complex with MYO5B and RAB11A. Interacts with ANO1. Interacts with SLC26A8. Interacts with AHCYL1; the interaction increases CFTR activity. Interacts with CSE1L. The core-glycosylated form interacts with GORASP2 (via PDZ GRASP-type 1 domain) in respone to ER stress. Interacts with MARCHF2; the interaction leads to CFTR ubiqtuitination and degradation. Interacts with ADGRG2. N-glycosylated. In terms of processing, phosphorylated; cAMP treatment promotes phosphorylation and activates the channel. Dephosphorylation decreases the ATPase activity (in vitro). Phosphorylation at PKA sites activates the channel. Phosphorylation at PKC sites enhances the response to phosphorylation by PKA. Phosphorylated by AMPK; this inhibits channel activity. Post-translationally, ubiquitinated, leading to its degradation in the lysosome. Deubiquitination by USP10 in early endosomes enhances its endocytic recycling to the cell membrane. Ubiquitinated by RNF185 during ER stress. Ubiquitinated by MARCHF2.

It is found in the apical cell membrane. The protein localises to the early endosome membrane. It localises to the cell membrane. Its subcellular location is the recycling endosome membrane. The protein resides in the endoplasmic reticulum membrane. It is found in the nucleus. It carries out the reaction ATP + H2O + closed Cl(-) channel = ADP + phosphate + open Cl(-) channel.. It catalyses the reaction chloride(in) = chloride(out). The catalysed reaction is hydrogencarbonate(in) = hydrogencarbonate(out). The enzyme catalyses ATP + H2O = ADP + phosphate + H(+). Functionally, epithelial ion channel that plays an important role in the regulation of epithelial ion and water transport and fluid homeostasis. Mediates the transport of chloride ions across the cell membrane. Possesses an intrinsic ATPase activity and utilizes ATP to gate its channel; the passive flow of anions through the channel is gated by cycles of ATP binding and hydrolysis by the ATP-binding domains. The ion channel is also permeable to HCO(3)(-); selectivity depends on the extracellular chloride concentration. Exerts its function also by modulating the activity of other ion channels and transporters. Contributes to the regulation of the pH and the ion content of the epithelial fluid layer. Modulates the activity of the epithelial sodium channel (ENaC) complex, in part by regulating the cell surface expression of the ENaC complex. May regulate bicarbonate secretion and salvage in epithelial cells by regulating the transporter SLC4A7. Can inhibit the chloride channel activity of ANO1. Plays a role in the chloride and bicarbonate homeostasis during sperm epididymal maturation and capacitation. In Didelphis virginiana (North American opossum), this protein is Cystic fibrosis transmembrane conductance regulator.